A 369-amino-acid polypeptide reads, in one-letter code: MAKFELYAEVDVSISGHQYPVIICRNGLIDPELINRFITSKQVLIVTNRTVAPLYLGHLQSVLPSKQCDVVILEDGEEHKNQRSLSTIYDSLIQNKHHRDTSIIALGGGVIGDMAGFAASTYQRGVRFIQLPTTLLAQVDASVGGKTAINHPAGKNMIGSFYQPQAVIIDLNTLKTLPEREFRAGIAEMIKYALLVGGSFFERIQAVLQQGLTVHSPELPLLIAECCQVKAKIVEQDERESGVRALLNLGHTFAHALETYTDYKKWLHGEAVAIGLYCAAVLSEKKGLLDKPIVDQVEKMLIHAGLPHKIPNSIDLIQLRELMSLDKKIKNNCLRFVMIKKPGACYIDDSVTEDCLHNTLINVVEGEQK.

Residues 75-80, 109-113, 133-134, Lys146, Lys155, and 173-176 each bind NAD(+); these read DGEEHK, GVIGD, TT, and TLKT. Zn(2+) contacts are provided by Glu188, His251, and His268.

This sequence belongs to the sugar phosphate cyclases superfamily. Dehydroquinate synthase family. It depends on Co(2+) as a cofactor. The cofactor is Zn(2+). NAD(+) is required as a cofactor.

It localises to the cytoplasm. The catalysed reaction is 7-phospho-2-dehydro-3-deoxy-D-arabino-heptonate = 3-dehydroquinate + phosphate. Its pathway is metabolic intermediate biosynthesis; chorismate biosynthesis; chorismate from D-erythrose 4-phosphate and phosphoenolpyruvate: step 2/7. Its function is as follows. Catalyzes the conversion of 3-deoxy-D-arabino-heptulosonate 7-phosphate (DAHP) to dehydroquinate (DHQ). This chain is 3-dehydroquinate synthase, found in Legionella pneumophila (strain Lens).